A 2271-amino-acid chain; its full sequence is Protein Ycf2 (2271 aa).

Position 1628–1635 (1628–1635 (GSIGTGRS)) interacts with ATP.

This sequence belongs to the Ycf2 family.

The protein localises to the plastid. The protein resides in the chloroplast stroma. Functionally, probable ATPase of unknown function. Its presence in a non-photosynthetic plant (Epifagus virginiana) and experiments in tobacco indicate that it has an essential function which is probably not related to photosynthesis. The polypeptide is Protein Ycf2 (Illicium oligandrum (Star anise)).